The chain runs to 350 residues: Holliday junction branch migration complex subunit RuvB (350 aa).

The large ATPase domain (RuvB-L) stretch occupies residues 4-184; it reads ADRIVTASSR…FGIVQRLEFY (181 aa). Residues Ile23, Arg24, Gly65, Lys68, Thr69, Thr70, 131 to 133, Arg174, Tyr184, and Arg221 contribute to the ATP site; that span reads EDF. Residue Thr69 coordinates Mg(2+). Residues 185–255 are small ATPAse domain (RuvB-S); that stretch reads STEDLATIVR…IADLALNMLD (71 aa). The head domain (RuvB-H) stretch occupies residues 258-350; it reads ERGFDHQDRR…TPDLFEGDIV (93 aa). Residues Arg294, Arg313, and Arg318 each coordinate DNA.

The protein belongs to the RuvB family. Homohexamer. Forms an RuvA(8)-RuvB(12)-Holliday junction (HJ) complex. HJ DNA is sandwiched between 2 RuvA tetramers; dsDNA enters through RuvA and exits via RuvB. An RuvB hexamer assembles on each DNA strand where it exits the tetramer. Each RuvB hexamer is contacted by two RuvA subunits (via domain III) on 2 adjacent RuvB subunits; this complex drives branch migration. In the full resolvosome a probable DNA-RuvA(4)-RuvB(12)-RuvC(2) complex forms which resolves the HJ.

It localises to the cytoplasm. It catalyses the reaction ATP + H2O = ADP + phosphate + H(+). In terms of biological role, the RuvA-RuvB-RuvC complex processes Holliday junction (HJ) DNA during genetic recombination and DNA repair, while the RuvA-RuvB complex plays an important role in the rescue of blocked DNA replication forks via replication fork reversal (RFR). RuvA specifically binds to HJ cruciform DNA, conferring on it an open structure. The RuvB hexamer acts as an ATP-dependent pump, pulling dsDNA into and through the RuvAB complex. RuvB forms 2 homohexamers on either side of HJ DNA bound by 1 or 2 RuvA tetramers; 4 subunits per hexamer contact DNA at a time. Coordinated motions by a converter formed by DNA-disengaged RuvB subunits stimulates ATP hydrolysis and nucleotide exchange. Immobilization of the converter enables RuvB to convert the ATP-contained energy into a lever motion, pulling 2 nucleotides of DNA out of the RuvA tetramer per ATP hydrolyzed, thus driving DNA branch migration. The RuvB motors rotate together with the DNA substrate, which together with the progressing nucleotide cycle form the mechanistic basis for DNA recombination by continuous HJ branch migration. Branch migration allows RuvC to scan DNA until it finds its consensus sequence, where it cleaves and resolves cruciform DNA. The protein is Holliday junction branch migration complex subunit RuvB of Stutzerimonas stutzeri (strain A1501) (Pseudomonas stutzeri).